The primary structure comprises 513 residues: Cytochrome P450 77A3 (513 aa).

C451 provides a ligand contact to heme.

The protein belongs to the cytochrome P450 family. The cofactor is heme.

The protein is Cytochrome P450 77A3 (CYP77A3) of Glycine max (Soybean).